Here is a 62-residue protein sequence, read N- to C-terminus: Sperm protamine P1 (62 aa).

The interval 1-46 is disordered; the sequence is MARCRRHSRSRSRSRNQCQRRRRRHYNRRRTYRRSRRHSRRRRVRR.

The protein belongs to the protamine P1 family. Testis.

It localises to the nucleus. Its subcellular location is the chromosome. Functionally, protamines substitute for histones in the chromatin of sperm during the haploid phase of spermatogenesis. They compact sperm DNA into a highly condensed, stable and inactive complex. This chain is Sperm protamine P1 (PRM1), found in Planigale gilesi (Flat-skulled marsupial mouse).